A 507-amino-acid polypeptide reads, in one-letter code: MNEFQRGGNKHRSWQQCFLYPLFFQEDLYAIAHDYHLDRSSSSEPAENCISNAFSFLTVKRSISRIRQQNESIVLFWNCDRNQWIDRNRSSSSELILEGLVVVLEISFSMRLKHSLEVMNGWKSFRSTHCLFPLMEEKFPHSNYILDIRVPYSIHPEILVRAFRRWIRDAPSLHLLRRILYECQNSSNAENLQKAILVVLRENTKFYLFLWNSYVYECESILVPLLKRSSHSRXXXXXXXXXXXXXXXXXXXXXXXXXXXXXKKIWLLKDPFIPYVRYGERSLIAXKGTHLQVKKCRYHLLNFWQCYFHLWFQPYRVCILELSKNCSSFLGFFLSVKMKSLMVRTKMVDDLLITYIITNEFDAIAPIRSIIGLLAKERFCDISGRPISKLAWTSLSDDDILDRFDRIWRNLFHYYSGSINQDGLYCIKYILLLSCAKTLACKHKTTIRVVREELGSKLFTKSFSKEREFISSFFSKTRSQRERIWHLDILRIIPLANSWQKIQNKKK.

It belongs to the intron maturase 2 family. MatK subfamily.

The protein resides in the plastid. It is found in the chloroplast. Usually encoded in the trnK tRNA gene intron. Probably assists in splicing its own and other chloroplast group II introns. The protein is Maturase K of Araucaria heterophylla (Norfolk Island pine).